The primary structure comprises 320 residues: MSKIQNHQKVVLVGDGAVGSSYAFAMAQQGIAEEFVIVDVVKDRTVGDALDLEDATPFTAPKNIYSGEYSDCKDADLVVITAGAPQKPGETRLDLVNKNLNILSTIVKPVVDSGFDGIFLVAANPVDILTYATWKFSGFPKEKVIGSGISLDSARLRVALGKKFNVSPDSVDAYIMGEHGDSEFAAYSTASIGTKPLLDIAKEEGVSTDELAEIEDSVRNKAYEIINKKGATFYGVGTALMRISKAILRDENAVLPVGAYMDGEYGLNDIYIGTPAVINGQGLNRVIESPLSDDEMKKMTDSATTLKKVLTDGLKALEEK.

Residues Val18, Asp39, Arg44, Tyr69, and 83-84 (GA) contribute to the NAD(+) site. The substrate site is built by Gln86 and Arg92. Residues Thr105, 122–124 (AAN), and Ser147 each bind NAD(+). Substrate is bound at residue 124–127 (NPVD). A substrate-binding site is contributed by 152–155 (DSAR). The Proton acceptor role is filled by His179. Tyr223 is modified (phosphotyrosine). Thr232 provides a ligand contact to substrate.

Belongs to the LDH/MDH superfamily. LDH family. As to quaternary structure, homotetramer.

The protein localises to the cytoplasm. The enzyme catalyses (S)-lactate + NAD(+) = pyruvate + NADH + H(+). It participates in fermentation; pyruvate fermentation to lactate; (S)-lactate from pyruvate: step 1/1. In terms of biological role, catalyzes the conversion of lactate to pyruvate. The chain is L-lactate dehydrogenase from Pediococcus pentosaceus (strain ATCC 25745 / CCUG 21536 / LMG 10740 / 183-1w).